The chain runs to 230 residues: Small ribosomal subunit protein uS3 (230 aa).

Positions 39 to 107 (VRKFLEKKLE…PAQINIAEIR (69 aa)) constitute a KH type-2 domain.

Belongs to the universal ribosomal protein uS3 family. In terms of assembly, part of the 30S ribosomal subunit. Forms a tight complex with proteins S10 and S14.

Functionally, binds the lower part of the 30S subunit head. Binds mRNA in the 70S ribosome, positioning it for translation. The chain is Small ribosomal subunit protein uS3 from Shewanella amazonensis (strain ATCC BAA-1098 / SB2B).